Reading from the N-terminus, the 130-residue chain is Ribonuclease pancreatic (130 aa).

An N-terminal signal peptide occupies residues 1 to 6 (VQPSLG). Positions 13 and 16 each coordinate substrate. His18 serves as the catalytic Proton acceptor. Intrachain disulfides connect Cys32/Cys90, Cys46/Cys101, Cys64/Cys116, and Cys71/Cys78. N-linked (GlcNAc...) asparagine glycosylation occurs at Asn40. Residues 47–51 (KPVNT), Lys72, and Arg91 contribute to the substrate site. His125 serves as the catalytic Proton donor.

The protein belongs to the pancreatic ribonuclease family. Monomer. Interacts with and forms tight 1:1 complexes with RNH1. Dimerization of two such complexes may occur. Interaction with RNH1 inhibits this protein. In terms of tissue distribution, pancreas.

It localises to the secreted. The catalysed reaction is an [RNA] containing cytidine + H2O = an [RNA]-3'-cytidine-3'-phosphate + a 5'-hydroxy-ribonucleotide-3'-[RNA].. It catalyses the reaction an [RNA] containing uridine + H2O = an [RNA]-3'-uridine-3'-phosphate + a 5'-hydroxy-ribonucleotide-3'-[RNA].. Functionally, endonuclease that catalyzes the cleavage of RNA on the 3' side of pyrimidine nucleotides. Acts on single-stranded and double-stranded RNA. The chain is Ribonuclease pancreatic (RNASE1) from Cricetulus griseus (Chinese hamster).